We begin with the raw amino-acid sequence, 399 residues long: STOREKEEPER protein (399 aa).

Disordered stretches follow at residues 1–160 (MAPK…RSLW) and 250–301 (GISN…EEQQ). The span at 20–54 (EEQELVEESQEEEEQQSREEEGEEESGEETEEDEE) shows a compositional bias: acidic residues. The segment covering 69 to 79 (KLVQTPQKPQF) has biased composition (polar residues). 2 stretches are compositionally biased toward low complexity: residues 80-100 (SSES…SGNS) and 116-125 (AAKAATPSKP). Basic and acidic residues-rich tracts occupy residues 143–152 (KIAEEEEKKS) and 270–299 (KTVE…KEEE).

The protein belongs to the GeBP family. Expressed in tubers and in leaves treated with sucrose.

The protein localises to the nucleus. Functionally, may act as a transcriptional regulator. Binds specifically to the B-box motif, a promoter element that is required for the tuber-specific and sucrose inducible expression of the patatin gene. The chain is STOREKEEPER protein from Solanum tuberosum (Potato).